We begin with the raw amino-acid sequence, 245 residues long: 1-(5-phosphoribosyl)-5-[(5-phosphoribosylamino)methylideneamino] imidazole-4-carboxamide isomerase (245 aa).

Asp-8 serves as the catalytic Proton acceptor. The active-site Proton donor is the Asp-129.

This sequence belongs to the HisA/HisF family.

The protein resides in the cytoplasm. It carries out the reaction 1-(5-phospho-beta-D-ribosyl)-5-[(5-phospho-beta-D-ribosylamino)methylideneamino]imidazole-4-carboxamide = 5-[(5-phospho-1-deoxy-D-ribulos-1-ylimino)methylamino]-1-(5-phospho-beta-D-ribosyl)imidazole-4-carboxamide. The protein operates within amino-acid biosynthesis; L-histidine biosynthesis; L-histidine from 5-phospho-alpha-D-ribose 1-diphosphate: step 4/9. The chain is 1-(5-phosphoribosyl)-5-[(5-phosphoribosylamino)methylideneamino] imidazole-4-carboxamide isomerase from Rhodopseudomonas palustris (strain ATCC BAA-98 / CGA009).